The primary structure comprises 700 residues: Phenylalanine ammonia-lyase hkm12 (700 aa).

The active-site Proton donor/acceptor is Tyr-82. Positions Ala-183–Gly-185 form a cross-link, 5-imidazolinone (Ala-Gly). Ser-184 is modified (2,3-didehydroalanine (Ser)). Residues Asn-242, Gln-325, Arg-331, Asn-361, Lys-432, Glu-460, and Asn-463 each coordinate (E)-cinnamate.

The protein belongs to the PAL/histidase family. In terms of processing, contains an active site 4-methylidene-imidazol-5-one (MIO), which is formed autocatalytically by cyclization and dehydration of residues Ala-Ser-Gly.

It carries out the reaction L-phenylalanine = (E)-cinnamate + NH4(+). Its pathway is secondary metabolite biosynthesis. Functionally, phenylalanine ammonia-lyase; part of the gene cluster that mediates the biosynthesis of hancockiamides, an unusual new family of N-cinnamoylated piperazines. The NRPS hkm10 and the NmrA-like reductase hkm9 are proposed to convert two molecules of L-Phe to the intermediary piperazine called xenocockiamide A. Xenocockiamide A is then converted to hancockiamide D via a series of hydroxylations and O-methylations. The tyrosinase hkm6 may catalyze an aromatic hydroxylation, then the 2-oxoglutarate-dependent Fe(II) dioxygenase hkm4 and the FAD-dependent phenol hydroxylase hkm7 may catalyze consecutive hydroxylations to install 2 more hydroxy groups, and the methyltransferase hkm8 probably catalyzes two methylations using 2 molecules of S-adenosyl-L-methionine (SAM). The NRPS hkm11 activates and transfers trans-cinnamate supplied by the PAL hkm12 to hancockiamide D and produces hancockiamide A. NRPS Hkm11 has the flexibility to tolerate the bulky hancockiamide G as a substrate and the absence of the acetyl-transferase hkm3 opens up the opportunity for hkm11 to introduce a second N-cinnamoyl moiety. The cytochrome P450 monooxygenase hkm5 catalyzes the methylenedioxy bridge formation, converting hancockiamide A into hancockiamide G. Hkm5 can also convert hancockiamide B into hancockiamide C, and hancockiamide D into hancockiamide H. The N-acetyltransferase hkm3 finally transfers an acetyl group to 1-N of piperazine, converting hancockiamide A into hancockiamide B and hancockiamide G into hancockiamide C. The sequence is that of Phenylalanine ammonia-lyase hkm12 from Aspergillus hancockii.